An 81-amino-acid polypeptide reads, in one-letter code: Photosystem I iron-sulfur center (81 aa).

4Fe-4S ferredoxin-type domains lie at 2 to 31 and 39 to 68; these read AHSVKVYDTCIGCTQCVRACPCDVLEMVPW and IASAPRTEDCIGCKRCETACPTDFLSVRVY. Cysteine 11, cysteine 14, cysteine 17, cysteine 21, cysteine 48, cysteine 51, cysteine 54, and cysteine 58 together coordinate [4Fe-4S] cluster.

The eukaryotic PSI reaction center is composed of at least 11 subunits. The cofactor is [4Fe-4S] cluster.

The protein resides in the plastid. It localises to the chloroplast thylakoid membrane. The catalysed reaction is reduced [plastocyanin] + hnu + oxidized [2Fe-2S]-[ferredoxin] = oxidized [plastocyanin] + reduced [2Fe-2S]-[ferredoxin]. In terms of biological role, apoprotein for the two 4Fe-4S centers FA and FB of photosystem I (PSI); essential for photochemical activity. FB is the terminal electron acceptor of PSI, donating electrons to ferredoxin. The C-terminus interacts with PsaA/B/D and helps assemble the protein into the PSI complex. Required for binding of PsaD and PsaE to PSI. PSI is a plastocyanin/cytochrome c6-ferredoxin oxidoreductase, converting photonic excitation into a charge separation, which transfers an electron from the donor P700 chlorophyll pair to the spectroscopically characterized acceptors A0, A1, FX, FA and FB in turn. In Gracilaria tenuistipitata var. liui (Red alga), this protein is Photosystem I iron-sulfur center.